A 651-amino-acid polypeptide reads, in one-letter code: Epithelial sodium channel subunit beta (651 aa).

Topologically, residues 1 to 50 (MFLKRWFIRALHRLQKGPGYGYSELFVWYCNNTNTHGPKRLIIEGPKKKT) are cytoplasmic. The helical transmembrane segment at 51–71 (LWSLFTVTFACLVFWQWGLLI) threads the bilayer. Over 72–541 (QTYLSWGVSV…GGQFGFWMGG (470 aa)) the chain is Extracellular. 8 disulfides stabilise this stretch: Cys98/Cys281, Cys205/Cys212, Cys258/Cys265, Cys370/Cys457, Cys395/Cys453, Cys399/Cys449, Cys408/Cys435, and Cys410/Cys424. The chain crosses the membrane as a helical span at residues 542–562 (SVLCIIEFGEVFIDCIWIAVI). Over 563–651 (RFVKWYKNRK…TEHHSDSEDL (89 aa)) the chain is Cytoplasmic. The disordered stretch occupies residues 612–651 (QPPDLYLPTTLEIPGTPPPKYDSLRVHPIDTEHHSDSEDL). Positions 633–651 (DSLRVHPIDTEHHSDSEDL) are enriched in basic and acidic residues.

It belongs to the amiloride-sensitive sodium channel (TC 1.A.6) family. SCNN1B subfamily. In terms of assembly, component of the heterotrimeric epithelial sodium channel (ENaC) composed of an alpha/SCNN1A, a beta/SCNN1B and a gamma/SCNN1G subunit. As to expression, strongly expressed in gill, kidney and rectum and more weakly in brain, eye, liver and muscle.

It localises to the apical cell membrane. The protein localises to the cytoplasmic vesicle membrane. It carries out the reaction Na(+)(in) = Na(+)(out). With respect to regulation, originally identified and characterized by its inhibition by the diuretic drug amiloride. Functionally, this is one of the three pore-forming subunits of the heterotrimeric epithelial sodium channel (ENaC), a critical regulator of sodium balance and fluid homeostasis. ENaC operates in epithelial tissues, where it mediates the electrodiffusion of sodium ions from extracellular fluid through the apical membrane of cells, with water following osmotically. This Neoceratodus forsteri (Australian lungfish) protein is Epithelial sodium channel subunit beta.